A 310-amino-acid chain; its full sequence is Aspartate carbamoyltransferase catalytic subunit (310 aa).

Residues Arg-59 and Thr-60 each contribute to the carbamoyl phosphate site. Residue Lys-87 participates in L-aspartate binding. Carbamoyl phosphate contacts are provided by Arg-109, His-137, and Gln-140. 2 residues coordinate L-aspartate: Arg-170 and Arg-225. 2 residues coordinate carbamoyl phosphate: Gly-266 and Pro-267.

It belongs to the aspartate/ornithine carbamoyltransferase superfamily. ATCase family. As to quaternary structure, heterododecamer (2C3:3R2) of six catalytic PyrB chains organized as two trimers (C3), and six regulatory PyrI chains organized as three dimers (R2).

It carries out the reaction carbamoyl phosphate + L-aspartate = N-carbamoyl-L-aspartate + phosphate + H(+). It participates in pyrimidine metabolism; UMP biosynthesis via de novo pathway; (S)-dihydroorotate from bicarbonate: step 2/3. In terms of biological role, catalyzes the condensation of carbamoyl phosphate and aspartate to form carbamoyl aspartate and inorganic phosphate, the committed step in the de novo pyrimidine nucleotide biosynthesis pathway. The polypeptide is Aspartate carbamoyltransferase catalytic subunit (Pelobacter propionicus (strain DSM 2379 / NBRC 103807 / OttBd1)).